The primary structure comprises 179 residues: Large ribosomal subunit protein uL5 (179 aa).

This sequence belongs to the universal ribosomal protein uL5 family. Part of the 50S ribosomal subunit; part of the 5S rRNA/L5/L18/L25 subcomplex. Contacts the 5S rRNA and the P site tRNA. Forms a bridge to the 30S subunit in the 70S ribosome.

Functionally, this is one of the proteins that bind and probably mediate the attachment of the 5S RNA into the large ribosomal subunit, where it forms part of the central protuberance. In the 70S ribosome it contacts protein S13 of the 30S subunit (bridge B1b), connecting the 2 subunits; this bridge is implicated in subunit movement. Contacts the P site tRNA; the 5S rRNA and some of its associated proteins might help stabilize positioning of ribosome-bound tRNAs. The chain is Large ribosomal subunit protein uL5 from Synechococcus elongatus (strain ATCC 33912 / PCC 7942 / FACHB-805) (Anacystis nidulans R2).